Reading from the N-terminus, the 216-residue chain is Orotidine 5'-phosphate decarboxylase (216 aa).

Substrate is bound by residues Asp-12, Lys-34, 62–71 (DFKVADIDAT), Ser-119, 172–182 (PGVGFQGGNAK), Gly-194, and Arg-195. Residue Lys-64 is the Proton donor of the active site.

This sequence belongs to the OMP decarboxylase family. Type 1 subfamily. Homodimer.

The enzyme catalyses orotidine 5'-phosphate + H(+) = UMP + CO2. It participates in pyrimidine metabolism; UMP biosynthesis via de novo pathway; UMP from orotate: step 2/2. Catalyzes the decarboxylation of orotidine 5'-monophosphate (OMP) to uridine 5'-monophosphate (UMP). This is Orotidine 5'-phosphate decarboxylase from Methanosphaera stadtmanae (strain ATCC 43021 / DSM 3091 / JCM 11832 / MCB-3).